Consider the following 189-residue polypeptide: Autophagy receptor ATG45 (189 aa).

A binds glycogen region spans residues Met1–Asn96. A required for sequestration into autophagosomes region spans residues Glu97 to Lys189. Ser107 bears the Phosphoserine mark. The ATG8 interaction motif (AIM) signature appears at Tyr127–Leu130. Ser172 carries the phosphoserine modification. A may facilitate interactions with the autophagosome membrane region spans residues Leu176 to Trp187.

Interacts with ATG8.

The protein resides in the cytoplasm. It is found in the cytosol. It localises to the cytoplasmic vesicle. Its subcellular location is the autophagosome. Autophagy receptor for glycogen that facilitates the sequestration of glycogen assemblies into autophagosomes as part of bulk autophagy; the autophagy of glycogen (glycophagy) is stimulated during prolonged nitrogen starvation and during sporulation. The polypeptide is Autophagy receptor ATG45 (Saccharomyces cerevisiae (strain ATCC 204508 / S288c) (Baker's yeast)).